A 511-amino-acid polypeptide reads, in one-letter code: 2-isopropylmalate synthase (511 aa).

The Pyruvate carboxyltransferase domain occupies 6–269 (IIIFDTTLRD…YTDIKCENIF (264 aa)). Mn(2+) contacts are provided by Asp15, His203, His205, and Asn239. The regulatory domain stretch occupies residues 394–511 (VIEKLSVISG…SLKVEERKMA (118 aa)).

This sequence belongs to the alpha-IPM synthase/homocitrate synthase family. LeuA type 1 subfamily. As to quaternary structure, homodimer. It depends on Mn(2+) as a cofactor.

It localises to the cytoplasm. The catalysed reaction is 3-methyl-2-oxobutanoate + acetyl-CoA + H2O = (2S)-2-isopropylmalate + CoA + H(+). The protein operates within amino-acid biosynthesis; L-leucine biosynthesis; L-leucine from 3-methyl-2-oxobutanoate: step 1/4. Catalyzes the condensation of the acetyl group of acetyl-CoA with 3-methyl-2-oxobutanoate (2-ketoisovalerate) to form 3-carboxy-3-hydroxy-4-methylpentanoate (2-isopropylmalate). This is 2-isopropylmalate synthase from Campylobacter jejuni (strain RM1221).